A 567-amino-acid polypeptide reads, in one-letter code: MDCPHQDVLHLIKYFRKEWPVVSDSERTTICGADNMLLTLQLALAEVNKQNGKEFSVSLSDVLLTWKYLVKHKLGLACEDTVVPKDYADIQKTYDLFLKNSNSLDLIDIYEKISTAGSSEAHFLSSEQLLDFLTNDVCLSEGTDFPIVSTPCKNNLDTVKVKPTLKRIFLAYLNLLVNAKNDFALAQVLNCPERGLGREAFTDLKHTSRLKNMSIFLVATSFIRTIELGGKGYAPSESDPLRKHLKGLSLFVHFIDRLNEIFGETHDPRTAGELLLSTIKMHLIKGRGSGDPLSEAATEVAQDLDLRIKYLINLVSEDKSSGTTGISPVRPKIRAINRGTASGGRETIKTLLKLLDEEAANPPSKNKADLLCADEENTLFGAFSLFTLFRSPEQTGSSPKALSQRVQKAINKDKPKLKHNLIRSQFACTYKDSNLTQTKQWDFPSMSQVPSCIHPAPKIVPVLCFDEEPLENDLQKGLKQSSGNIDLKTAEQVKNKPCKNVGNKRSKRKQVDIQSETTNGQENEPPQKKAVVELTSSKANKQGVSRNKASKNKLITGQAKLTSFFRV.

A disordered region spans residues 485-552 (IDLKTAEQVK…GVSRNKASKN (68 aa)). Composition is skewed to polar residues over residues 512–524 (DIQS…QENE) and 534–552 (LTSS…ASKN).

It belongs to the PARI family.

It is found in the cytoplasm. The protein resides in the nucleus. Required to suppress inappropriate homologous recombination, thereby playing a central role DNA repair and in the maintenance of genomic stability. The sequence is that of PCNA-interacting partner (parpbp) from Xenopus laevis (African clawed frog).